The following is a 144-amino-acid chain: Putative RNase YutE (144 aa).

Arg-96 is a catalytic residue. An RX(4)HXY motif motif is present at residues 96–103; the sequence is RKTLVQQY.

This sequence belongs to the HepT RNase toxin family. Homodimer, probably forms a complex with cognate antitoxin YutD.

Its function is as follows. Probable toxic component of a putative type VII toxin-antitoxin (TA) system, probably an RNase. Probably neutralized by cognate antitoxin YutD. The protein is Putative RNase YutE (yutE) of Bacillus subtilis (strain 168).